Consider the following 314-residue polypeptide: GTPase Era (314 aa).

One can recognise an Era-type G domain in the interval 21 to 189 (KSGFVGIIGR…QKTLINLLEP (169 aa)). Positions 29–36 (GRPNVGKS) are G1. 29 to 36 (GRPNVGKS) lines the GTP pocket. The tract at residues 55 to 59 (QTTRN) is G2. The interval 76–79 (DTPG) is G3. GTP contacts are provided by residues 76–80 (DTPGI) and 138–141 (NKSD). The segment at 138 to 141 (NKSD) is G4. A G5 region spans residues 168–170 (FSA). In terms of domain architecture, KH type-2 spans 212 to 296 (IREQILQQTR…YLQLFVKVEP (85 aa)).

This sequence belongs to the TRAFAC class TrmE-Era-EngA-EngB-Septin-like GTPase superfamily. Era GTPase family. Monomer.

The protein localises to the cytoplasm. It localises to the cell inner membrane. Its function is as follows. An essential GTPase that binds both GDP and GTP, with rapid nucleotide exchange. Plays a role in 16S rRNA processing and 30S ribosomal subunit biogenesis and possibly also in cell cycle regulation and energy metabolism. In Rippkaea orientalis (strain PCC 8801 / RF-1) (Cyanothece sp. (strain PCC 8801)), this protein is GTPase Era.